Consider the following 352-residue polypeptide: MNETTPLLLRAARGENVERPPVWMMRQAGRYMKVYRDLRDNHPSFRERSENPDLSYEISMQPFKAFQPDGVILFSDILTPLPGMGINFDIVESKGPLINDPIRSLKQVKDLKPLQPEESMSFVGEVLGRLRESVGNKAAVLGFVGAPWTLAAYVVEGKSSKNYAVIKAMAFQEPELLHQLLNHFAESIANYLSYQIQSGAQVVQMFDSWAGQLSPQDYDEFAAPYQQKVVNLVKEKHPDTPMILYISGSAGVIERMGQTGVDIVSLDWTVDMADGLKRLPQAVGVQGNVDPGLLFGTPDAIRSRIVDVVRKAKGRKHILNLGHGILPGTPEENARVFFEAGKNVNELIKVSS.

Residues 26–30 (RQAGR), Asp-76, Tyr-153, Ser-208, and His-323 each bind substrate.

The protein belongs to the uroporphyrinogen decarboxylase family. Homodimer.

Its subcellular location is the cytoplasm. It carries out the reaction uroporphyrinogen III + 4 H(+) = coproporphyrinogen III + 4 CO2. The protein operates within porphyrin-containing compound metabolism; protoporphyrin-IX biosynthesis; coproporphyrinogen-III from 5-aminolevulinate: step 4/4. In terms of biological role, catalyzes the decarboxylation of four acetate groups of uroporphyrinogen-III to yield coproporphyrinogen-III. The chain is Uroporphyrinogen decarboxylase from Prochlorococcus marinus (strain NATL2A).